The sequence spans 99 residues: Cobalt transport protein CbiN (99 aa).

The next 2 membrane-spanning stretches (helical) occupy residues 6-26 (VLMI…YSGL) and 68-88 (SLLF…FFGY).

Belongs to the CbiN family. Forms an energy-coupling factor (ECF) transporter complex composed of an ATP-binding protein (A component, CbiO), a transmembrane protein (T component, CbiQ) and 2 possible substrate-capture proteins (S components, CbiM and CbiN) of unknown stoichimetry.

It localises to the cell membrane. Its pathway is cofactor biosynthesis; adenosylcobalamin biosynthesis. Part of the energy-coupling factor (ECF) transporter complex CbiMNOQ involved in cobalt import. This chain is Cobalt transport protein CbiN, found in Methanococcus vannielii (strain ATCC 35089 / DSM 1224 / JCM 13029 / OCM 148 / SB).